Consider the following 738-residue polypeptide: NAD(P)H-quinone oxidoreductase subunit 5, chloroplastic (738 aa).

17 helical membrane passes run 9 to 29 (WVIP…LFLI), 39 to 59 (IWAF…LHLS), 89 to 109 (VDPL…LVLI), 125 to 145 (FVYI…SNLI), 147 to 167 (IYFF…FWFT), 185 to 205 (GDFG…SLEF), 219 to 239 (NGIN…GAVA), 258 to 278 (TPIS…FLLA), 280 to 300 (LLPL…VGTI), 327 to 347 (LGYM…FHLI), 354 to 374 (ALLF…VGYS), 396 to 416 (TTFL…CFWS), 425 to 445 (WLYS…TAFY), 542 to 562 (LFPL…GIPF), 610 to 630 (SLAI…YSFF), 691 to 711 (GVID…GEEI), and 717 to 737 (GRIS…LFFI).

It belongs to the complex I subunit 5 family. In terms of assembly, NDH is composed of at least 16 different subunits, 5 of which are encoded in the nucleus.

The protein localises to the plastid. It is found in the chloroplast thylakoid membrane. The enzyme catalyses a plastoquinone + NADH + (n+1) H(+)(in) = a plastoquinol + NAD(+) + n H(+)(out). It catalyses the reaction a plastoquinone + NADPH + (n+1) H(+)(in) = a plastoquinol + NADP(+) + n H(+)(out). Functionally, NDH shuttles electrons from NAD(P)H:plastoquinone, via FMN and iron-sulfur (Fe-S) centers, to quinones in the photosynthetic chain and possibly in a chloroplast respiratory chain. The immediate electron acceptor for the enzyme in this species is believed to be plastoquinone. Couples the redox reaction to proton translocation, and thus conserves the redox energy in a proton gradient. The polypeptide is NAD(P)H-quinone oxidoreductase subunit 5, chloroplastic (ndhF) (Saccharum hybrid (Sugarcane)).